The following is a 474-amino-acid chain: UDP-N-acetylmuramate--L-alanine ligase (474 aa).

Position 112-118 (112-118 (GTHGKTT)) interacts with ATP.

Belongs to the MurCDEF family.

Its subcellular location is the cytoplasm. The enzyme catalyses UDP-N-acetyl-alpha-D-muramate + L-alanine + ATP = UDP-N-acetyl-alpha-D-muramoyl-L-alanine + ADP + phosphate + H(+). It functions in the pathway cell wall biogenesis; peptidoglycan biosynthesis. Its function is as follows. Cell wall formation. This Cupriavidus taiwanensis (strain DSM 17343 / BCRC 17206 / CCUG 44338 / CIP 107171 / LMG 19424 / R1) (Ralstonia taiwanensis (strain LMG 19424)) protein is UDP-N-acetylmuramate--L-alanine ligase.